The primary structure comprises 383 residues: 1-deoxy-D-xylulose 5-phosphate reductoisomerase (383 aa).

6 residues coordinate NADPH: Thr-10, Gly-11, Ser-12, Ile-13, Asn-38, and Asn-121. Lys-122 contributes to the 1-deoxy-D-xylulose 5-phosphate binding site. NADPH is bound at residue Glu-123. A Mn(2+)-binding site is contributed by Asp-147. 1-deoxy-D-xylulose 5-phosphate-binding residues include Ser-148, Glu-149, Ser-172, and His-195. Glu-149 lines the Mn(2+) pocket. Position 201 (Gly-201) interacts with NADPH. 1-deoxy-D-xylulose 5-phosphate is bound by residues Ser-208, Asn-213, Lys-214, and Glu-217. A Mn(2+)-binding site is contributed by Glu-217.

It belongs to the DXR family. The cofactor is Mg(2+). It depends on Mn(2+) as a cofactor.

The catalysed reaction is 2-C-methyl-D-erythritol 4-phosphate + NADP(+) = 1-deoxy-D-xylulose 5-phosphate + NADPH + H(+). It functions in the pathway isoprenoid biosynthesis; isopentenyl diphosphate biosynthesis via DXP pathway; isopentenyl diphosphate from 1-deoxy-D-xylulose 5-phosphate: step 1/6. Functionally, catalyzes the NADPH-dependent rearrangement and reduction of 1-deoxy-D-xylulose-5-phosphate (DXP) to 2-C-methyl-D-erythritol 4-phosphate (MEP). In Vesicomyosocius okutanii subsp. Calyptogena okutanii (strain HA), this protein is 1-deoxy-D-xylulose 5-phosphate reductoisomerase.